The following is a 161-amino-acid chain: Regulator of ribonuclease activity A (161 aa).

The protein belongs to the RraA family. Homotrimer. Binds to both RNA-binding sites in the C-terminal region of Rne and to RhlB.

Its subcellular location is the cytoplasm. Functionally, globally modulates RNA abundance by binding to RNase E (Rne) and regulating its endonucleolytic activity. Can modulate Rne action in a substrate-dependent manner by altering the composition of the degradosome. Modulates RNA-binding and helicase activities of the degradosome. The protein is Regulator of ribonuclease activity A of Enterobacter sp. (strain 638).